The sequence spans 680 residues: Glutamine-dependent NAD(+) synthetase (680 aa).

Positions 12-276 (VRVAACTHHA…EHRSVADVDT (265 aa)) constitute a CN hydrolase domain. Catalysis depends on E52, which acts as the Proton acceptor; for glutaminase activity. K121 (for glutaminase activity) is an active-site residue. Y127 contacts L-glutamine. Catalysis depends on C176, which acts as the Nucleophile; for glutaminase activity. Residues S203 and R209 each contribute to the L-glutamine site. An ATP-binding site is contributed by 366-373 (GVSGGLDS). A deamido-NAD(+)-binding site is contributed by N456. An ATP-binding site is contributed by T480. Deamido-NAD(+)-binding positions include E485, 490 to 493 (WSTY), and K636.

In the C-terminal section; belongs to the NAD synthetase family.

The catalysed reaction is deamido-NAD(+) + L-glutamine + ATP + H2O = L-glutamate + AMP + diphosphate + NAD(+) + H(+). Its pathway is cofactor biosynthesis; NAD(+) biosynthesis; NAD(+) from deamido-NAD(+) (L-Gln route): step 1/1. In terms of biological role, catalyzes the ATP-dependent amidation of deamido-NAD to form NAD. Uses L-glutamine as a nitrogen source. This chain is Glutamine-dependent NAD(+) synthetase, found in Mycobacterium leprae (strain TN).